The chain runs to 258 residues: uncharacterized protein (258 aa).

It belongs to the IIV-6 219L family.

This is an uncharacterized protein from Aedes vexans (Inland floodwater mosquito).